The chain runs to 345 residues: N-acetyl-gamma-glutamyl-phosphate reductase (345 aa).

The active site involves cysteine 149.

It belongs to the NAGSA dehydrogenase family. Type 1 subfamily.

It is found in the cytoplasm. It catalyses the reaction N-acetyl-L-glutamate 5-semialdehyde + phosphate + NADP(+) = N-acetyl-L-glutamyl 5-phosphate + NADPH + H(+). The protein operates within amino-acid biosynthesis; L-arginine biosynthesis; N(2)-acetyl-L-ornithine from L-glutamate: step 3/4. Its function is as follows. Catalyzes the NADPH-dependent reduction of N-acetyl-5-glutamyl phosphate to yield N-acetyl-L-glutamate 5-semialdehyde. In Bacillus mycoides (strain KBAB4) (Bacillus weihenstephanensis), this protein is N-acetyl-gamma-glutamyl-phosphate reductase.